Consider the following 20-residue polypeptide: GYLDYDEVDDNRAKLPLDAR.

Position 5 is a sulfotyrosine (tyrosine 5).

Heterohexamer; disulfide linked. Contains 2 sets of 3 non-identical chains (alpha, beta and gamma). The 2 heterotrimers are in head to head conformation with the N-termini in a small central domain. Post-translationally, conversion of fibrinogen to fibrin is triggered by thrombin, which cleaves fibrinopeptides A and B from alpha and beta chains, and thus exposes the N-terminal polymerization sites responsible for the formation of the soft clot.

The protein resides in the secreted. Functionally, cleaved by the protease thrombin to yield monomers which, together with fibrinogen alpha (FGA) and fibrinogen gamma (FGG), polymerize to form an insoluble fibrin matrix. Fibrin has a major function in hemostasis as one of the primary components of blood clots. In addition, functions during the early stages of wound repair to stabilize the lesion and guide cell migration during re-epithelialization. Was originally thought to be essential for platelet aggregation, based on in vitro studies using anticoagulated blood. However subsequent studies have shown that it is not absolutely required for thrombus formation in vivo. Enhances expression of SELP in activated platelets. Maternal fibrinogen is essential for successful pregnancy. Fibrin deposition is also associated with infection, where it protects against IFNG-mediated hemorrhage. May also facilitate the antibacterial immune response via both innate and T-cell mediated pathways. The sequence is that of Fibrinogen beta chain (FGB) from Capra hircus (Goat).